The primary structure comprises 63 residues: Large ribosomal subunit protein bL32 (63 aa).

It belongs to the bacterial ribosomal protein bL32 family.

This chain is Large ribosomal subunit protein bL32, found in Acholeplasma laidlawii.